The following is a 284-amino-acid chain: Four and a half LIM domains protein 5 (284 aa).

The C4-type zinc finger occupies 8 to 32 (CQYCTASLLGKKYVLKDDSLFCVTC). LIM zinc-binding domains are found at residues 39-100 (NYCE…ECSS), 101-160 (KCFH…KEFA), 161-220 (HYCN…LYAN), and 223-283 (VACS…MDSD).

As to quaternary structure, interacts with CREM (via the third LIM domain). Interacts (via second LIM domain) with SPAG8.

It localises to the nucleus. May be involved in the regulation of spermatogenesis. Stimulates CREM transcriptional activity in a phosphorylation-independent manner. In Macaca fascicularis (Crab-eating macaque), this protein is Four and a half LIM domains protein 5 (FHL5).